Here is a 283-residue protein sequence, read N- to C-terminus: MEGYKSFLVFLVSSLLLGFLGVIFTLVWVLHWREGLGWDGGAAEFNWHPVLVTSGFIFIQGIAIIVYRLPWTWNCSKLLMKFIHAGLHLTAFVFTIVALVAVFDFHNAKNIPNMYSLHSWIGLTVVILYALQLVLGVSIYLLPFARDTLRAALMPVHVYSGLLIFGTVIATALMGITEKLIFSLKEPPYSKMPPEAIFVNTFGLIILVFGGLVVWMVTTPAWKRPREQEIKALNPTVSSPDGTEEGSTITDCSNTEKSDVELNSEAARKRILKLDDAGQRSTM.

Residues 1–5 lie on the Cytoplasmic side of the membrane; the sequence is MEGYK. The helical transmembrane segment at 6-30 threads the bilayer; that stretch reads SFLVFLVSSLLLGFLGVIFTLVWVL. In terms of domain architecture, Cytochrome b561 spans 13–218; the sequence is SSLLLGFLGV…FGGLVVWMVT (206 aa). The Extracellular segment spans residues 31-45; sequence HWREGLGWDGGAAEF. A helical transmembrane segment spans residues 46-67; that stretch reads NWHPVLVTSGFIFIQGIAIIVY. Residues His48, Arg68, and Lys77 each coordinate heme b. The Cytoplasmic segment spans residues 68–76; that stretch reads RLPWTWNCS. Lys77 and Lys81 together coordinate L-ascorbate. Residues 77-103 traverse the membrane as a helical segment; that stretch reads KLLMKFIHAGLHLTAFVFTIVALVAVF. His84 contributes to the heme b binding site. The Extracellular portion of the chain corresponds to 104–116; it reads DFHNAKNIPNMYS. Residue His106 participates in Fe(3+) binding. Residues 113 to 116 and His118 contribute to the heme b site; that span reads NMYS. A helical membrane pass occupies residues 117–142; sequence LHSWIGLTVVILYALQLVLGVSIYLL. At 143 to 149 the chain is on the cytoplasmic side; it reads PFARDTL. Residue Arg150 coordinates L-ascorbate. A helical transmembrane segment spans residues 150–177; it reads RAALMPVHVYSGLLIFGTVIATALMGIT. Heme b contacts are provided by His157 and Glu178. Residues 178 to 195 are Extracellular-facing; that stretch reads EKLIFSLKEPPYSKMPPE. The helical transmembrane segment at 196–220 threads the bilayer; the sequence is AIFVNTFGLIILVFGGLVVWMVTTP. Over 221-283 the chain is Cytoplasmic; that stretch reads AWKRPREQEI…LDDAGQRSTM (63 aa). Position 223 (Lys223) interacts with heme b. The disordered stretch occupies residues 234 to 263; the sequence is NPTVSSPDGTEEGSTITDCSNTEKSDVELN. Polar residues predominate over residues 235 to 253; that stretch reads PTVSSPDGTEEGSTITDCS. A compositionally biased stretch (basic and acidic residues) spans 254 to 263; that stretch reads NTEKSDVELN.

As to quaternary structure, homodimer. Heme b is required as a cofactor.

Its subcellular location is the cell membrane. It is found in the apical cell membrane. The catalysed reaction is Fe(3+)(out) + L-ascorbate(in) = monodehydro-L-ascorbate radical(in) + Fe(2+)(out) + H(+). The enzyme catalyses Cu(2+)(out) + L-ascorbate(in) = Cu(+)(out) + monodehydro-L-ascorbate radical(in) + H(+). It catalyses the reaction monodehydro-L-ascorbate radical(out) + L-ascorbate(in) = monodehydro-L-ascorbate radical(in) + L-ascorbate(out). Its function is as follows. Plasma membrane reductase that uses cytoplasmic ascorbate as an electron donor to reduce extracellular Fe(3+) into Fe(2+). It is also able to reduce extracellular monodehydro-L-ascorbate and may be involved in extracellular ascorbate regeneration. May also function as a cupric transmembrane reductase. The polypeptide is Plasma membrane ascorbate-dependent reductase CYBRD1 (cybrd1) (Xenopus tropicalis (Western clawed frog)).